The following is a 98-amino-acid chain: DNA-binding protein Fis (98 aa).

Residues 74–93 (QTRAALMMGINRGTLRKKLK) constitute a DNA-binding region (H-T-H motif).

Belongs to the transcriptional regulatory Fis family. Homodimer.

Its function is as follows. Activates ribosomal RNA transcription. Plays a direct role in upstream activation of rRNA promoters. The protein is DNA-binding protein Fis of Citrobacter koseri (strain ATCC BAA-895 / CDC 4225-83 / SGSC4696).